A 402-amino-acid polypeptide reads, in one-letter code: Ferredoxin--NADP reductase (402 aa).

Residues 18 to 74 form the CpcD-like domain; it reads NRLFIYEVVGLGGDGRNENSLVRKSGTTFITVPYARMNQEMQRITKLGGKIVSIRPA. The disordered stretch occupies residues 80–101; that stretch reads IVSEGQSSAQASAQSPMASSTK. Residues 85–99 are compositionally biased toward low complexity; that stretch reads QSSAQASAQSPMASS. Residues 120 to 245 form the FAD-binding FR-type domain; it reads KTPFLGKCIE…TGPVGKEMLL (126 aa). FAD-binding positions include 179–182, 200–202, tyrosine 206, 218–220, and threonine 260; these read RLYS, CVR, and VCS. Serine 182 and arginine 202 together coordinate NADP(+). NADP(+)-binding positions include threonine 260, 292–293, 322–323, lysine 332, 332–336, 361–362, and glutamate 400; these read VP, SR, KVYVQ, and GL.

The protein belongs to the ferredoxin--NADP reductase type 1 family. The cofactor is FAD.

Its subcellular location is the cellular thylakoid membrane. It carries out the reaction 2 reduced [2Fe-2S]-[ferredoxin] + NADP(+) + H(+) = 2 oxidized [2Fe-2S]-[ferredoxin] + NADPH. This is Ferredoxin--NADP reductase (petH) from Picosynechococcus sp. (strain ATCC 27264 / PCC 7002 / PR-6) (Agmenellum quadruplicatum).